The chain runs to 326 residues: Putative [LysW]-lysine/[LysW]-ornithine hydrolase (326 aa).

H66 is a Zn(2+) binding site. D68 is a catalytic residue. D90 lines the Zn(2+) pocket. The active-site Proton acceptor is E117. E118, E139, and H297 together coordinate Zn(2+).

This sequence belongs to the peptidase M20A family. LysK subfamily. It depends on Zn(2+) as a cofactor. Co(2+) serves as cofactor.

It localises to the cytoplasm. It carries out the reaction [amino-group carrier protein]-C-terminal-gamma-(L-lysyl)-L-glutamate + H2O = [amino-group carrier protein]-C-terminal-L-glutamate + L-lysine. It catalyses the reaction [amino-group carrier protein]-C-terminal-gamma-(L-ornithyl)-L-glutamate + H2O = [amino-group carrier protein]-C-terminal-L-glutamate + L-ornithine. It participates in amino-acid biosynthesis; L-lysine biosynthesis via AAA pathway; L-lysine from L-alpha-aminoadipate (Thermus route): step 5/5. It functions in the pathway amino-acid biosynthesis; L-arginine biosynthesis. Functionally, catalyzes the release of L-lysine from [LysW]-gamma-L-lysine and the release of L-ornithine from [LysW]-L-ornithine. This chain is Putative [LysW]-lysine/[LysW]-ornithine hydrolase, found in Pyrococcus furiosus (strain ATCC 43587 / DSM 3638 / JCM 8422 / Vc1).